A 298-amino-acid polypeptide reads, in one-letter code: ATP phosphoribosyltransferase (298 aa).

Belongs to the ATP phosphoribosyltransferase family. Long subfamily. It depends on Mg(2+) as a cofactor.

It is found in the cytoplasm. The catalysed reaction is 1-(5-phospho-beta-D-ribosyl)-ATP + diphosphate = 5-phospho-alpha-D-ribose 1-diphosphate + ATP. Its pathway is amino-acid biosynthesis; L-histidine biosynthesis; L-histidine from 5-phospho-alpha-D-ribose 1-diphosphate: step 1/9. With respect to regulation, feedback inhibited by histidine. Its function is as follows. Catalyzes the condensation of ATP and 5-phosphoribose 1-diphosphate to form N'-(5'-phosphoribosyl)-ATP (PR-ATP). Has a crucial role in the pathway because the rate of histidine biosynthesis seems to be controlled primarily by regulation of HisG enzymatic activity. The sequence is that of ATP phosphoribosyltransferase from Vibrio campbellii (strain ATCC BAA-1116).